Consider the following 64-residue polypeptide: Prokaryotic ubiquitin-like protein Pup (64 aa).

Over residues 1 to 11 (MAQEQTKRTGG) the composition is skewed to basic and acidic residues. A disordered region spans residues 1–37 (MAQEQTKRTGGGDEDDTPGADGAAGQERREKLAEDTD). Residues 21 to 58 (DGAAGQERREKLAEDTDDLLDEIDDVLEENAEDFVRAY) are ARC ATPase binding. A coiled-coil region spans residues 24–52 (AGQERREKLAEDTDDLLDEIDDVLEENAE). Glutamine 64 bears the Deamidated glutamine mark. Glutamine 64 is covalently cross-linked (Isoglutamyl lysine isopeptide (Gln-Lys) (interchain with K-? in acceptor proteins)).

This sequence belongs to the prokaryotic ubiquitin-like protein family. In terms of assembly, strongly interacts with the proteasome-associated ATPase ARC through a hydrophobic interface; the interacting region of Pup lies in its C-terminal half. There is one Pup binding site per ARC hexamer ring. In terms of processing, is modified by deamidation of its C-terminal glutamine to glutamate by the deamidase Dop, a prerequisite to the subsequent pupylation process.

Its pathway is protein degradation; proteasomal Pup-dependent pathway. Functionally, protein modifier that is covalently attached to lysine residues of substrate proteins, thereby targeting them for proteasomal degradation. The tagging system is termed pupylation. The chain is Prokaryotic ubiquitin-like protein Pup from Rhodococcus jostii (strain RHA1).